The chain runs to 1050 residues: Ankyrin repeat domain-containing protein 27 (1050 aa).

The tract at residues 1–372 (MALYDEDLLK…RQGSLSAKPP (372 aa)) is sufficient for GEF activity towards RAB21. Residues 233–371 (ASEDAAFNKI…IRQGSLSAKP (139 aa)) form the VPS9 domain. ANK repeat units lie at residues 396–426 (SPTD…DKDA), 462–491 (RGHT…VVNA), 495–524 (HGAT…SAEV), 528–560 (NGNT…RLDI), 564–593 (KGDT…SPEI), and 597–627 (LKET…RQKS). The tract at residues 396–460 (SPTDCLFKHI…PSVVTPFSRD (65 aa)) is sufficient for interaction with VPS29. The interval 451-600 (PSVVTPFSRD…PEIQNRLKET (150 aa)) is interaction with RAB38. Residues 451 to 730 (PSVVTPFSRD…APAQKRLAKV (280 aa)) form an interaction with RAB32 region. The tract at residues 630 to 665 (APVQSLQRSVDSISQESSTSSFSSMSAGSRQEETKK) is disordered. The span at 638-658 (SVDSISQESSTSSFSSMSAGS) shows a compositional bias: low complexity. Positions 658–707 (SRQEETKKDYREVEKLLRAVADGDLEMVRYLLEWTEEDLEDAEDTVSAVD) are required for interaction with VAMP7. ANK repeat units lie at residues 668–698 (REVE…DLED), 743–772 (DGSS…NAGA), 776–805 (DQAV…KPNK), 809–838 (SGNT…AINT), and 842–871 (KGNT…SVQV). The sufficient for interaction with VPS29 stretch occupies residues 692–746 (TEEDLEDAEDTVSAVDPEFCHPLCQCPKCAPAQKRLAKVPASGLGVNVTSQDGSS). Ser962 and Ser970 each carry phosphoserine. The tract at residues 987 to 1050 (PAQSGSHAAE…TPQEVSASRS (64 aa)) is disordered. Basic and acidic residues predominate over residues 994–1007 (AAEKGNSDWPERPR). Position 1023 is a phosphothreonine (Thr1023). A compositionally biased stretch (polar residues) spans 1040–1050 (STPQEVSASRS).

As to quaternary structure, interacts with RAB21 (GDP-bound form), VPS29, KIF5A, KIF5C, GOLGA4. Interacts with RAB32 (GTP-bound form), RAB38 (GTP-bound form), VAMP7. Interacts with low affinity with RAB5. ANKRD27:RAB32 heterodimers can homodimerize to form tetramers. Can interact with RAB38 or RAB32, VPS29 and VAMP7 simultaneously. A decreased interaction with RAB32 seen in the presence of SGSM2.

Its subcellular location is the early endosome. The protein resides in the late endosome. It localises to the cytoplasmic vesicle membrane. It is found in the lysosome. The protein localises to the cell membrane. Its subcellular location is the melanosome. Its function is as follows. May be a guanine exchange factor (GEF) for Rab21, Rab32 and Rab38 and regulate endosome dynamics. May regulate the participation of VAMP7 in membrane fusion events; in vitro inhibits VAMP7-mediated SNARE complex formation by trapping VAMP7 in a closed, fusogenically inactive conformation. Involved in peripheral melanosomal distribution of TYRP1 in melanocytes; the function, which probably is implicating vesicle-trafficking, includes cooperation with Rab32, Rab38 and VAMP7. Involved in the regulation of neurite growth; the function seems to require its GEF activity, probably towards Rab21, and VAMP7 but not Rab32/38. Proposed to be involved in Golgi sorting of VAMP7 and transport of VAMP7 vesicles to the cell surface; the function seems to implicate kinesin heavy chain isoform 5 proteins, GOLGA4, RAB21 and MACF1. Required for the colocalization of VAMP7 and Rab21, probably on TGN sites. Involved in GLUT1 endosome-to-plasma membrane trafficking; the function is dependent of association with VPS29. Regulates the proper trafficking of melanogenic enzymes TYR, TYRP1 and DCT/TYRP2 to melanosomes in melanocytes. The sequence is that of Ankyrin repeat domain-containing protein 27 (ANKRD27) from Pongo abelii (Sumatran orangutan).